Consider the following 1164-residue polypeptide: Protein PLASTID MOVEMENT IMPAIRED 1-RELATED 1 (1164 aa).

The segment at 30–54 is disordered; it reads KNPRGSVAGSNKTPTKPLSRSNLAE. Positions 37–51 are enriched in polar residues; sequence AGSNKTPTKPLSRSN. The 149-residue stretch at 69–217 folds into the C2 NT-type domain; sequence INHVRNRRFN…TLSMSFGYTV (149 aa). Residues 224–263 show a composition bias toward polar residues; the sequence is PASSGSTQNFRSSSNVKQTSNNTGLTRAISAKSSLGNGKS. Disordered stretches follow at residues 224–268, 466–486, 1038–1063, and 1124–1164; these read PASS…SRRY, APEE…PKDA, SELK…PMEE, and GSAK…IMPK. Composition is skewed to basic and acidic residues over residues 469–486 and 1052–1062; these read EGNK…PKDA and SDAKKEEKPME.

It is found in the cytoplasm. Its function is as follows. Together with PMI1, necessary for chloroplast and nuclear photorelocation movements via the regulation of chloroplast-actin (cp-actin) filaments in pavement cells. This is Protein PLASTID MOVEMENT IMPAIRED 1-RELATED 1 from Arabidopsis thaliana (Mouse-ear cress).